Reading from the N-terminus, the 272-residue chain is Glutamate racemase (272 aa).

Residues 10–11 (DS) and 42–43 (YG) each bind substrate. Catalysis depends on Cys-74, which acts as the Proton donor/acceptor. 75–76 (NT) lines the substrate pocket. The active-site Proton donor/acceptor is the Cys-185. 186–187 (TH) serves as a coordination point for substrate.

Belongs to the aspartate/glutamate racemases family.

It catalyses the reaction L-glutamate = D-glutamate. It functions in the pathway cell wall biogenesis; peptidoglycan biosynthesis. Functionally, provides the (R)-glutamate required for cell wall biosynthesis. This chain is Glutamate racemase, found in Bacillus pumilus (strain SAFR-032).